The following is a 169-amino-acid chain: Lipoprotein signal peptidase (169 aa).

The next 2 helical transmembrane spans lie at 59–79 (PTVLLLLTGVITIMVLAYVIW) and 84–104 (TTLFLLPFALITGGGIGNMID). Catalysis depends on residues D113 and D139. Residues 132 to 152 (WPIFNIADSAITIGACMLMIF) traverse the membrane as a helical segment.

This sequence belongs to the peptidase A8 family.

Its subcellular location is the cell inner membrane. It catalyses the reaction Release of signal peptides from bacterial membrane prolipoproteins. Hydrolyzes -Xaa-Yaa-Zaa-|-(S,diacylglyceryl)Cys-, in which Xaa is hydrophobic (preferably Leu), and Yaa (Ala or Ser) and Zaa (Gly or Ala) have small, neutral side chains.. It functions in the pathway protein modification; lipoprotein biosynthesis (signal peptide cleavage). In terms of biological role, this protein specifically catalyzes the removal of signal peptides from prolipoproteins. In Pelodictyon phaeoclathratiforme (strain DSM 5477 / BU-1), this protein is Lipoprotein signal peptidase.